A 447-amino-acid polypeptide reads, in one-letter code: MTTILKHLPAGQRIGIAFSGGLDTSAALLWMRQKGAVPYAYTANLGQPDEDDYDAIPRRAMEYGAENARLIDCRKQLVAEGIAAIQCGAFHNTTGGLTYFNTTPLGRAVTGTMLVAAMKEDGVNIWGDGSTYKGNDIERFYRYGLLTNAELQIYKPWLDTDFIDELGGRHEMSEFMIACGFDYKMSVEKAYSTDSNMLGATHEAKDLEFLNSSVKIVNPIMGVKFWDESVKIPAEEVTVRFEQGHPVALNGKTFSDDVEMMLEANRIGGRHGLGMSDQIENRIIEAKSRGIYEAPGMALLHIAYERLLTGIHNEDTIEQYHSHGRQLGKLLYQGRWFDSQALMLRDGLQRWVASQITGEVTLELRRGNDYSILNTVSDNLTYKAERLTMEKGESVFSPDDRIGQLTMRNLDITDTREKLFGYAKAGLLTASSATGLPQVENLENKAK.

Residues 17–25 (AFSGGLDTS) and Ala43 contribute to the ATP site. Residue Tyr99 coordinates L-citrulline. 2 residues coordinate ATP: Gly129 and Thr131. Positions 131, 135, and 136 each coordinate L-aspartate. Residue Asn135 coordinates L-citrulline. Residue Asp136 participates in ATP binding. 2 residues coordinate L-citrulline: Arg139 and Ser192. Position 194 (Asp194) interacts with ATP. The L-citrulline site is built by Thr201, Glu203, and Glu280.

The protein belongs to the argininosuccinate synthase family. Type 2 subfamily. In terms of assembly, homotetramer.

Its subcellular location is the cytoplasm. It carries out the reaction L-citrulline + L-aspartate + ATP = 2-(N(omega)-L-arginino)succinate + AMP + diphosphate + H(+). It participates in amino-acid biosynthesis; L-arginine biosynthesis; L-arginine from L-ornithine and carbamoyl phosphate: step 2/3. In Salmonella typhi, this protein is Argininosuccinate synthase (argG).